A 100-amino-acid chain; its full sequence is Urease subunit gamma (100 aa).

The protein belongs to the urease gamma subunit family. Heterotrimer of UreA (gamma), UreB (beta) and UreC (alpha) subunits. Three heterotrimers associate to form the active enzyme.

The protein resides in the cytoplasm. It carries out the reaction urea + 2 H2O + H(+) = hydrogencarbonate + 2 NH4(+). Its pathway is nitrogen metabolism; urea degradation; CO(2) and NH(3) from urea (urease route): step 1/1. The protein is Urease subunit gamma of Mycobacterium ulcerans (strain Agy99).